Consider the following 163-residue polypeptide: Large ribosomal subunit protein uL10 (163 aa).

Belongs to the universal ribosomal protein uL10 family. As to quaternary structure, part of the ribosomal stalk of the 50S ribosomal subunit. The N-terminus interacts with L11 and the large rRNA to form the base of the stalk. The C-terminus forms an elongated spine to which L12 dimers bind in a sequential fashion forming a multimeric L10(L12)X complex.

Functionally, forms part of the ribosomal stalk, playing a central role in the interaction of the ribosome with GTP-bound translation factors. The chain is Large ribosomal subunit protein uL10 from Mannheimia succiniciproducens (strain KCTC 0769BP / MBEL55E).